Reading from the N-terminus, the 142-residue chain is Putative pre-16S rRNA nuclease (142 aa).

This sequence belongs to the YqgF nuclease family.

The protein resides in the cytoplasm. In terms of biological role, could be a nuclease involved in processing of the 5'-end of pre-16S rRNA. This Lactobacillus helveticus (strain DPC 4571) protein is Putative pre-16S rRNA nuclease.